A 474-amino-acid polypeptide reads, in one-letter code: N-lysine methyltransferase SETD6 (474 aa).

S14 is subject to Phosphoserine. Residues 63-287 form the SET domain; it reads PKVLVSRQGT…KGHEIFNTYG (225 aa). K64 is modified (N6-methylated lysine; by autocatalysis). S-adenosyl-L-methionine is bound at residue 74-76; that stretch reads AGY. Position 123 (W123) interacts with substrate. At K180 the chain carries N6-methylated lysine; by autocatalysis. Residue Y224 participates in S-adenosyl-L-methionine binding. Substrate contacts are provided by S225 and Q227. Residues 252 to 253 and Y298 contribute to the S-adenosyl-L-methionine site; that span reads NH. K373 carries the post-translational modification N6-methylated lysine; by autocatalysis.

Belongs to the class V-like SAM-binding methyltransferase superfamily. Histone-lysine methyltransferase family. SETD6 subfamily. Monomer, homodimer and homotrimer; these structures are stabilized in the presence of S-adenosyl-L-methionine (SAM). In terms of processing, automethylated.

Its subcellular location is the nucleus. The catalysed reaction is L-lysyl-[protein] + S-adenosyl-L-methionine = N(6)-methyl-L-lysyl-[protein] + S-adenosyl-L-homocysteine + H(+). The enzyme catalyses L-lysyl(8)-[histone H2AZ] + S-adenosyl-L-methionine = N(6)-methyl-L-lysyl(8)-[histone H2AZ] + S-adenosyl-L-homocysteine + H(+). In terms of biological role, protein-lysine N-methyltransferase. Monomethylates 'Lys-310' of the RELA subunit of NF-kappa-B complex, leading to down-regulation of NF-kappa-B transcription factor activity. Monomethylates 'Lys-8' of H2AZ (H2AZK8me1). Required for the maintenance of embryonic stem cell self-renewal. Methylates PAK4. The chain is N-lysine methyltransferase SETD6 (Setd6) from Rattus norvegicus (Rat).